Consider the following 118-residue polypeptide: Large ribosomal subunit protein bL19 (118 aa).

It belongs to the bacterial ribosomal protein bL19 family.

Its function is as follows. This protein is located at the 30S-50S ribosomal subunit interface and may play a role in the structure and function of the aminoacyl-tRNA binding site. The protein is Large ribosomal subunit protein bL19 of Teredinibacter turnerae (strain ATCC 39867 / T7901).